The following is a 268-amino-acid chain: MILVVDVGNTNIVLGLYEKQELVDFWRISTDEDKSSDEYSVLINQLFQYSGLNIKTVEDVIISSVVPNIMYSLEHAIRKLCNVEPLVVGPGVKTGINIKYDNPKQVGADRIVNAVAAFEKYGGPLIVVDFGTATTFCAISGHGEYLGGTISPGIKIASDALFQRAAKLPRVELVKPGKVICKSTVSSMQAGIVYGYVGLVEYIVNKMKKEFNVRSKIKVVATGGLSTLIDSETQCIDVVDKFLTLEGLSLIYERNRQERQAILKESQA.

6–13 lines the ATP pocket; sequence DVGNTNIV. Residues Tyr-100 and 107-110 contribute to the substrate site; that span reads GADR. Asp-109 serves as the catalytic Proton acceptor. K(+) is bound at residue Asp-129. Thr-132 is a binding site for ATP. A substrate-binding site is contributed by Thr-184.

The protein belongs to the type III pantothenate kinase family. In terms of assembly, homodimer. Requires NH4(+) as cofactor. K(+) serves as cofactor.

The protein resides in the cytoplasm. It catalyses the reaction (R)-pantothenate + ATP = (R)-4'-phosphopantothenate + ADP + H(+). The protein operates within cofactor biosynthesis; coenzyme A biosynthesis; CoA from (R)-pantothenate: step 1/5. In terms of biological role, catalyzes the phosphorylation of pantothenate (Pan), the first step in CoA biosynthesis. This is Type III pantothenate kinase from Alkaliphilus metalliredigens (strain QYMF).